The sequence spans 357 residues: mRNA endoribonuclease toxin LS (357 aa).

In terms of assembly, forms homodimer in solution. Forms a complex with cognate antitoxin RnlB and with enterobacteria phage T4 antitoxin Dmd.

The protein resides in the cytoplasm. Toxic component of a type II toxin-antitoxin (TA) system. A stable (half-life 27.6 minutes) endoribonuclease that in the absence of cognate antitoxin RnlB causes generalized RNA degradation. Degrades late enterobacteria phage T4 mRNAs, protecting the host against T4 reproduction. Activity is inhibited by cognate antitoxin RnlB and by enterobacteria phage T4 protein Dmd. Targets cyaA mRNA. The protein is mRNA endoribonuclease toxin LS (rnlA) of Escherichia coli (strain K12).